Consider the following 186-residue polypeptide: Temperature-induced lipocalin-1 (186 aa).

The HPR (Hydrophobic proline-rich) signature appears at P90–P97. The disordered stretch occupies residues K154–S174. The segment covering T158–P171 has biased composition (polar residues).

It belongs to the calycin superfamily. Lipocalin family. As to expression, expressed ubiquitously at similar levels, except in dry seeds (at protein level). Present in seeds.

It is found in the cell membrane. The protein resides in the cytoplasm. The protein localises to the plastid. Its subcellular location is the chloroplast membrane. Involved in basal (BT) and acquired thermotolerance (AT), probably by preventing plasma membrane lipids peroxidation induced by severe heat-shock (HS). Lipocalin that confers protection against oxidative stress caused by heat, freezing, paraquat and light. Confers resistance to high salt (NaCl) levels, probably by protecting chloroplasts from ion toxicity via ion homeostasis maintenance. Required for seed longevity by ensuring polyunsaturated lipids integrity. In Arabidopsis thaliana (Mouse-ear cress), this protein is Temperature-induced lipocalin-1.